We begin with the raw amino-acid sequence, 149 residues long: Probable glycine cleavage system H protein 2 (149 aa).

The Lipoyl-binding domain occupies 32–114; it reads IAVVGITDLA…YGQGWIAKIK (83 aa). Position 73 is an N6-lipoyllysine (Lys73).

It belongs to the GcvH family. As to quaternary structure, the glycine cleavage system is composed of four proteins: P, T, L and H. It depends on (R)-lipoate as a cofactor.

Its function is as follows. The glycine cleavage system catalyzes the degradation of glycine. The H protein shuttles the methylamine group of glycine from the P protein to the T protein. The sequence is that of Probable glycine cleavage system H protein 2 from Sulfolobus acidocaldarius (strain ATCC 33909 / DSM 639 / JCM 8929 / NBRC 15157 / NCIMB 11770).